The chain runs to 179 residues: Small ribosomal subunit protein uS5c (179 aa).

The 64-residue stretch at 26–89 folds into the S5 DRBM domain; that stretch reads FVERLIKISR…TDGRKNLIDV (64 aa).

It belongs to the universal ribosomal protein uS5 family. As to quaternary structure, part of the 30S ribosomal subunit. Contacts protein S4.

It localises to the plastid. The protein resides in the chloroplast. In terms of biological role, with S4 and S12 plays an important role in translational accuracy. This Thalassiosira pseudonana (Marine diatom) protein is Small ribosomal subunit protein uS5c (rps5).